The primary structure comprises 185 residues: Elongation factor P (185 aa).

It belongs to the elongation factor P family.

The protein resides in the cytoplasm. The protein operates within protein biosynthesis; polypeptide chain elongation. Functionally, involved in peptide bond synthesis. Stimulates efficient translation and peptide-bond synthesis on native or reconstituted 70S ribosomes in vitro. Probably functions indirectly by altering the affinity of the ribosome for aminoacyl-tRNA, thus increasing their reactivity as acceptors for peptidyl transferase. The protein is Elongation factor P of Finegoldia magna (strain ATCC 29328 / DSM 20472 / WAL 2508) (Peptostreptococcus magnus).